The sequence spans 118 residues: Large ribosomal subunit protein bL20 (118 aa).

It belongs to the bacterial ribosomal protein bL20 family.

Functionally, binds directly to 23S ribosomal RNA and is necessary for the in vitro assembly process of the 50S ribosomal subunit. It is not involved in the protein synthesizing functions of that subunit. This Acidiphilium cryptum (strain JF-5) protein is Large ribosomal subunit protein bL20.